The primary structure comprises 310 residues: Deoxyribonuclease gamma (310 aa).

The first 25 residues, 1–25 (MSLHPASPRLASLLLFILALHDTLA), serve as a signal peptide directing secretion. A Bipartite nuclear localization signal motif is present at residues 40 to 56 (KKENHEAMDIIVKIIKR). Residues E105 and H160 contribute to the active site. C199 and C236 are joined by a disulfide. A not required for free DNA-nuclease activity but required for activity towards liposome-coated DNA region spans residues 289–310 (SRAFTNNRKSVSLKKRKKGNRS). The Nuclear localization signal motif lies at 301-307 (LKKRKKG).

Belongs to the DNase I family. The cofactor is Ca(2+). Mg(2+) is required as a cofactor. Post-translationally, poly-ADP-ribosylated by PARP1. ADP-ribosylation negatively regulates enzymatic activity during apoptosis. Expressed at high levels in liver, spleen and testes. Expressed at lower levels in heart, lungs, skeletal muscle and kidney. Not expressed in brain. Predominantly expressed in macrophages; at protein level. Secreted by mononuclear phagocytes.

It is found in the nucleus. It localises to the endoplasmic reticulum. The protein resides in the secreted. With respect to regulation, inhibited by zinc. Inhibited by heparin and proteolysis by plasmin. Its function is as follows. Has DNA hydrolytic activity. Is capable of both single- and double-stranded DNA cleavage, producing DNA fragments with 3'-OH ends. Can cleave chromatin to nucleosomal units and cleaves nucleosomal and liposome-coated DNA. Acts in internucleosomal DNA fragmentation (INDF) during apoptosis and necrosis. The role in apoptosis includes myogenic and neuronal differentiation, and BCR-mediated clonal deletion of self-reactive B cells. Is active on chromatin in apoptotic cell-derived membrane-coated microparticles and thus suppresses anti-DNA autoimmunity. Together with DNASE1, plays a key role in degrading neutrophil extracellular traps (NETs). NETs are mainly composed of DNA fibers and are released by neutrophils to bind pathogens during inflammation. Degradation of intravascular NETs by DNASE1 and DNASE1L3 is required to prevent formation of clots that obstruct blood vessels and cause organ damage following inflammation. The sequence is that of Deoxyribonuclease gamma from Mus musculus (Mouse).